An 853-amino-acid polypeptide reads, in one-letter code: Dynamin-A (853 aa).

Positions 22–296 (PLDLPQIVVV…LMFHIRDTLP (275 aa)) constitute a Dynamin-type G domain. The G1 motif stretch occupies residues 32-39 (GSQSSGKS). 32-40 (GSQSSGKSS) is a GTP binding site. Residues 58–60 (VTR) are G2 motif. The G3 motif stretch occupies residues 138–141 (DLPG). Residues 207 to 210 (TKLD) are G4 motif. GTP contacts are provided by residues 207-213 (TKLDLMD) and 238-241 (NRSQ). Positions 237 to 240 (INRS) are G5 motif. Low complexity-rich tracts occupy residues 523–569 (DQYQ…QQNQ) and 590–607 (PAQQ…KGPQ). The disordered stretch occupies residues 523-738 (DQYQQQQQQQ…RYQDDFYGRG (216 aa)). Residues 610 to 624 (PPNQSKPSSIPQNGP) show a composition bias toward polar residues. Low complexity-rich tracts occupy residues 625 to 635 (NNNNNNNNNNN) and 664 to 728 (NNSN…SSYN). A GED domain is found at 762 to 853 (TELIRELLIS…IINEIRDFRN (92 aa)).

This sequence belongs to the TRAFAC class dynamin-like GTPase superfamily. Dynamin/Fzo/YdjA family.

The protein resides in the cytoplasm. Its function is as follows. Function in membrane trafficking processes along the endo-lysosomal pathway. The sequence is that of Dynamin-A (dymA) from Dictyostelium discoideum (Social amoeba).